The chain runs to 146 residues: Large ribosomal subunit protein uL15 (146 aa).

A compositionally biased stretch (basic and acidic residues) spans 1–18; it reads MKLHELKPSEGSRKERNR. Residues 1–57 form a disordered region; that stretch reads MKLHELKPSEGSRKERNRVGRGIGSGNGKTSGKGHKGQNARSGGGVRPGFEGGQMPL. 2 stretches are compositionally biased toward gly residues: residues 21–31 and 42–52; these read RGIGSGNGKTS and SGGGVRPGFEG.

Belongs to the universal ribosomal protein uL15 family. In terms of assembly, part of the 50S ribosomal subunit.

Binds to the 23S rRNA. The sequence is that of Large ribosomal subunit protein uL15 from Bacillus pumilus (strain SAFR-032).